We begin with the raw amino-acid sequence, 1157 residues long: Voltage-dependent calcium channel subunit alpha-2/delta-2 (1157 aa).

The signal sequence occupies residues 1–18 (MAVPARTCGASWPGPVRT). Residues 1-37 (MAVPARTCGASWPGPVRTARPWPGRGPRPCPDPRGPA) are disordered. The Extracellular segment spans residues 19 to 1119 (ARPWPGRGPR…TEDTSDCGRG (1101 aa)). The span at 24-34 (GRGPRPCPDPR) shows a compositional bias: pro residues. N-linked (GlcNAc...) asparagine glycosylation is present at Asn-205. A VWFA domain is found at 294-472 (DMVIIVDVSG…INTQEYLDVL (179 aa)). Residues Asp-300, Ser-302, and Ser-304 each coordinate a divalent metal cation. The MIDAS-like motif motif lies at 300-304 (DVSGS). Residues Asn-389, Asn-421, Asn-510, Asn-543, Asn-627, and Asn-864 are each glycosylated (N-linked (GlcNAc...) asparagine). A disulfide bond links Cys-446 and Cys-1104. The Cache domain occupies 488-577 (WTNVYEDALG…KPQITNFREP (90 aa)). A helical transmembrane segment spans residues 1120-1140 (ASFPPSLGVLVSLQLLLLLGL). Residues 1141–1157 (PPRPQPQIHSFTPSRRL) are Cytoplasmic-facing.

This sequence belongs to the calcium channel subunit alpha-2/delta family. As to quaternary structure, dimer formed of alpha-2-2 and delta-2 chains; disulfide-linked. Voltage-dependent calcium channels are multisubunit complexes, consisting of alpha-1 (CACNA1), alpha-2 (CACNA2D), beta (CACNB) and delta (CACNA2D) subunits in a 1:1:1:1 ratio. Post-translationally, N-glycosylated. May be proteolytically processed into subunits alpha-2-2 and delta-2 that are disulfide-linked. It is however unclear whether such cleavage really takes place in vivo and has a functional role. In terms of tissue distribution, in heart, it is highly expressed in atrium and at lower level in ventricle.

It is found in the membrane. Functionally, the alpha-2/delta subunit of voltage-dependent calcium channels regulates calcium current density and activation/inactivation kinetics of the calcium channel. Acts as a regulatory subunit for P/Q-type calcium channel (CACNA1A), N-type (CACNA1B), L-type (CACNA1C OR CACNA1D) and possibly T-type (CACNA1G). Overexpression induces apoptosis. The chain is Voltage-dependent calcium channel subunit alpha-2/delta-2 (Cacna2d2) from Rattus norvegicus (Rat).